Consider the following 712-residue polypeptide: Polyribonucleotide nucleotidyltransferase (712 aa).

Residues Asp488 and Asp494 each coordinate Mg(2+). The KH domain occupies 555–614; it reads PKIETINIPTDKIREVIGSGGKVIREIVATTGAKVDINDDGVVKVSASDGAKIKAAIDWI. The S1 motif domain maps to 624 to 692; sequence GKIYDGKVVK…DRGKTKLSMK (69 aa).

It belongs to the polyribonucleotide nucleotidyltransferase family. The cofactor is Mg(2+).

It is found in the cytoplasm. It catalyses the reaction RNA(n+1) + phosphate = RNA(n) + a ribonucleoside 5'-diphosphate. Functionally, involved in mRNA degradation. Catalyzes the phosphorolysis of single-stranded polyribonucleotides processively in the 3'- to 5'-direction. This chain is Polyribonucleotide nucleotidyltransferase, found in Caulobacter vibrioides (strain NA1000 / CB15N) (Caulobacter crescentus).